Reading from the N-terminus, the 195-residue chain is Phosphoheptose isomerase (195 aa).

The SIS domain maps to leucine 35 to asparagine 195. Asparagine 51–glycine 53 contacts substrate. Histidine 60 and glutamate 64 together coordinate Zn(2+). Substrate is bound by residues glutamate 64, asparagine 93 to aspartate 94, serine 119 to serine 121, serine 124, and glutamine 171. Residues glutamine 171 and histidine 179 each contribute to the Zn(2+) site.

Belongs to the SIS family. GmhA subfamily. As to quaternary structure, homotetramer. The cofactor is Zn(2+).

The protein resides in the cytoplasm. The catalysed reaction is 2 D-sedoheptulose 7-phosphate = D-glycero-alpha-D-manno-heptose 7-phosphate + D-glycero-beta-D-manno-heptose 7-phosphate. Its pathway is carbohydrate biosynthesis; D-glycero-D-manno-heptose 7-phosphate biosynthesis; D-glycero-alpha-D-manno-heptose 7-phosphate and D-glycero-beta-D-manno-heptose 7-phosphate from sedoheptulose 7-phosphate: step 1/1. Its function is as follows. Catalyzes the isomerization of sedoheptulose 7-phosphate in D-glycero-D-manno-heptose 7-phosphate. This Sulfurimonas denitrificans (strain ATCC 33889 / DSM 1251) (Thiomicrospira denitrificans (strain ATCC 33889 / DSM 1251)) protein is Phosphoheptose isomerase.